A 96-amino-acid polypeptide reads, in one-letter code: UPF0235 protein Ent638_3359 (96 aa).

Belongs to the UPF0235 family.

The sequence is that of UPF0235 protein Ent638_3359 from Enterobacter sp. (strain 638).